A 1213-amino-acid polypeptide reads, in one-letter code: Oligopeptidase PhomG' (1213 aa).

Zn(2+) is bound at residue His447. Glu448 is an active-site residue. Positions 451 and 454 each coordinate Zn(2+).

It belongs to the peptidase M3 family. Monomer. Zn(2+) serves as cofactor.

Its pathway is mycotoxin biosynthesis. Functionally, oligopeptidase; part of the gene cluster that mediates the biosynthesis of the phomopsins, a group of hexapeptide mycotoxins which infects lupins and causes lupinosis disease in livestock. Within the pathway, phomG and phomG' are probably involved in the processing of the phomA and phomA' precursors. The pathway starts with the processing of the precursor phomA by several endopeptidases including kexin proteases as well as the cluster-specific S41 family peptidase phomP1 and the oligopeptidase phomG to produce 10 identical copies of the hexapeptide Tyr-Val-Ile-Pro-Ile-Asp. After being excised from the precursor peptide, the core peptides are cyclized and modified post-translationally by enzymes encoded within the gene cluster. The timing and order of proteolysis of the phomA precursor and PTMs are still unknown. Two tyrosinase-like enzymes, phomQ1 and phomQ2, catalyze the chlorination and hydroxylation of Tyr, respectively. PhomYb, is proposed to be involved in the construction of the macrocyclic structure. The other 4 ustYa family proteins may be involved in PTMs that generate the unique structure of phomopsin A. PhomYa is required for the hydroxylation of C-beta of Tyr. PhomYc, phomYd, and phomYe are responsible for the biosynthesis of 2,3-dehydroisoleucine (dIle), 2,3-dehydroaspartic acid (dAsp), and 3,4-dehydroproline (dPro), respectively. While dIle formation by phomYc is indispensable for the installation of dAsp by phomYd, the order of the other PTMs have not been elucidated yet. Most of the biosynthetic enzymes likely have broad substrate specificity, and thus, there might be a metabolic grid from a precursor to phomopsin A. The enzyme(s) responsible for the biosynthesis of 3,4-dehydrovaline (dVal) have also not been identified yet. Finally, phomM acts as an S-adenosylmethionine-dependent alpha-N-methyltransferase that catalyzes two successive N-methylation reactions, converting N-desmethyl-phomopsin A to phomopsin A and phomopsin A further to an N,N-dimethylated congener called phomopsin E. This Diaporthe leptostromiformis (Lupinosis disease fungus) protein is Oligopeptidase PhomG'.